Consider the following 143-residue polypeptide: MFDFDATLPVMALQFILLAVILNAVFYKPLSKVLDERAEYIRQTESGAKEQLAKTEALVQEYELQLSSARKQSQEIIAQAQAEAQKLASERVAAAQKEAIARKEAVAAEIAQQKEEAFRSLEGQVASLSRQILEKLLGPELVR.

A helical transmembrane segment spans residues 6–26 (ATLPVMALQFILLAVILNAVF).

The protein belongs to the ATPase B chain family. F-type ATPases have 2 components, F(1) - the catalytic core - and F(0) - the membrane proton channel. F(1) has five subunits: alpha(3), beta(3), gamma(1), delta(1), epsilon(1). F(0) has four main subunits: a(1), b(1), b'(1) and c(10-14). The alpha and beta chains form an alternating ring which encloses part of the gamma chain. F(1) is attached to F(0) by a central stalk formed by the gamma and epsilon chains, while a peripheral stalk is formed by the delta, b and b' chains.

It is found in the cellular thylakoid membrane. Functionally, f(1)F(0) ATP synthase produces ATP from ADP in the presence of a proton or sodium gradient. F-type ATPases consist of two structural domains, F(1) containing the extramembraneous catalytic core and F(0) containing the membrane proton channel, linked together by a central stalk and a peripheral stalk. During catalysis, ATP synthesis in the catalytic domain of F(1) is coupled via a rotary mechanism of the central stalk subunits to proton translocation. Its function is as follows. Component of the F(0) channel, it forms part of the peripheral stalk, linking F(1) to F(0). The b'-subunit is a diverged and duplicated form of b found in plants and photosynthetic bacteria. This is ATP synthase subunit b' from Microcystis aeruginosa (strain NIES-843 / IAM M-2473).